Here is a 575-residue protein sequence, read N- to C-terminus: Alpha-humulene synthase (575 aa).

Positions 325, 329, 469, and 477 each coordinate Mg(2+). The DDXXD motif signature appears at 325 to 329 (DDLYD).

Belongs to the terpene synthase family. Tpsa subfamily. Requires Mg(2+) as cofactor. It depends on Mn(2+) as a cofactor.

It catalyses the reaction (2E,6E)-farnesyl diphosphate = alpha-humulene + diphosphate. It functions in the pathway sesquiterpene biosynthesis. Its pathway is terpene metabolism; oleoresin biosynthesis. Its function is as follows. Terpene synthase (TPS) involved in the biosynthesis of sesquiterpene natural products included in conifer oleoresin secretions and volatile emissions; these compounds contribute to biotic and abiotic stress defense against herbivores and pathogens. Catalyzes the conversion of (2E,6E)-farnesyl diphosphate (FPP) to (1E,4E,8E)-alpha-humulene. The sequence is that of Alpha-humulene synthase from Picea glauca (White spruce).